Here is a 154-residue protein sequence, read N- to C-terminus: Ascorbate-specific PTS system EIIA component (154 aa).

The 145-residue stretch at 6–150 (SLAVNKSIRL…QEVLDLIDRT (145 aa)) folds into the PTS EIIA type-2 domain. Histidine 68 acts as the Tele-phosphohistidine intermediate in catalysis. Residue histidine 68 is modified to Phosphohistidine.

The protein localises to the cytoplasm. Functionally, the phosphoenolpyruvate-dependent sugar phosphotransferase system (sugar PTS), a major carbohydrate active transport system, catalyzes the phosphorylation of incoming sugar substrates concomitantly with their translocation across the cell membrane. The enzyme II UlaABC PTS system is involved in ascorbate transport. The chain is Ascorbate-specific PTS system EIIA component (ulaC) from Shigella dysenteriae serotype 1 (strain Sd197).